We begin with the raw amino-acid sequence, 1031 residues long: MTSEYAELHCLSNFSFQRGASSARELFERASRHGYQALAITDECTLAGIVRAWQASISTGLPLIIGSEMHIENGPKAVLLVESQTGYEALCKLITVARRRARKGEYRLLREDFEPSSDGLLAIWLPDIEGDAQACLAHGRWLRERFAERLWLGVELHRGADDEQRLADLLALAQSLGIPAVASGDVHMHARGRRALQDTMTAIRHHTTVAEAGHLLFANGERHLRPLDALAEHYPDWLLAESVRIARRCTFDLKQLKYEYPHELVPKGQTPTSWLRELTERGARKRWPNGLTPATRAQVEKELALITEKKFDSYFLTVHDIVEFARSQHILCQGRGSAANSAVCYALGITELNPEKSNLLFERFISRERNEPPDIDVDFEHDRREEVIQYIFRRYGRGRAALTAVASTYHGSGAMRDVAKVLGLPPDQINALAEAFSRWSDSLPSPERLREYGFDADTPILKRVLALTGELIGFPRHLSQHPGGFVISEHPLETLVPVENAAMADRTIIQWDKDDLDLVGLLKVDILALGMLSALRRTFDLVHLHRGKRWTLADLPGDDRETYEMISRADTIGVFQIESRAQMAMLPRLRPEKFYDLVIEVAIVRPGPIQGDMVHPYLRRRNKEEAITYPPKLKSVFERTLGVPLFQEQVMEVAIIAAGYTPGEADELRRAMAAWKRHGGLEPHRERLRTGMLKNGYEADFADRIFEQIKGFGSYGFPESHAASFALLTYASCWLKCHEPAAFTCALINSWPMGFYSPDQLLQDARRHHIEIRPVDVRYSDWDCSLEPLDHPDSTRNLAIRLGLRMVRGFREDDARRIETARSKRLFSDATDLTLRAGLDARAAEALADSGALRGLIGHRHRARWEVAGVEAQRPLFNDLPSEDTQVTLPLPTVAEDLMADYATLGTTLGPHPLALLRRQLAAKRFRSSQDLLSLENDRTLSVAGLVIGRQRPGTASGVTFVTLEDEFGMVNVVVWRDLAERQRKVLVGSQLLQVFGRLESKSGVRHLIAQRLYDLTPLLTGLDVRSRDFQ.

This sequence belongs to the DNA polymerase type-C family. DnaE2 subfamily.

The protein resides in the cytoplasm. It carries out the reaction DNA(n) + a 2'-deoxyribonucleoside 5'-triphosphate = DNA(n+1) + diphosphate. DNA polymerase involved in damage-induced mutagenesis and translesion synthesis (TLS). It is not the major replicative DNA polymerase. This is Error-prone DNA polymerase from Pseudomonas savastanoi pv. phaseolicola (strain 1448A / Race 6) (Pseudomonas syringae pv. phaseolicola (strain 1448A / Race 6)).